A 102-amino-acid chain; its full sequence is Synaptobrevin-like protein 5 (102 aa).

The 61-residue stretch at 17–77 (KIMRTRRELD…VKIKREMSWK (61 aa)) folds into the v-SNARE coiled-coil homology domain.

This Caenorhabditis elegans protein is Synaptobrevin-like protein 5 (snb-5).